The primary structure comprises 195 residues: Dephospho-CoA kinase (195 aa).

The 193-residue stretch at 3–195 (IIGLTGSIAM…FSIIENLLKN (193 aa)) folds into the DPCK domain. ATP is bound at residue 11-16 (AMGKST).

This sequence belongs to the CoaE family.

Its subcellular location is the cytoplasm. The enzyme catalyses 3'-dephospho-CoA + ATP = ADP + CoA + H(+). It functions in the pathway cofactor biosynthesis; coenzyme A biosynthesis; CoA from (R)-pantothenate: step 5/5. Catalyzes the phosphorylation of the 3'-hydroxyl group of dephosphocoenzyme A to form coenzyme A. This Bartonella quintana (strain Toulouse) (Rochalimaea quintana) protein is Dephospho-CoA kinase.